The primary structure comprises 918 residues: MARYRKPERVTRVISGSDEYVDFKKIDEEPTDKLDPNLGIIKSMPKLEPEEINDTLLRQTNLRSFKPGLSAVNDLDNESTPVVLAFGGINTARPDEYLNSSSVFVYHPDRNKWNFYTTMMEPRTYHAVGYFHRRVYVFGGYNPLHCRKGKMQATATTFQLTVQTKQWRKRADMRYARAHHNVTVMDERIFVFGGRDSNGEILAAVEMYEPEMDQWTTLASIPEPMMGSAIANNEGIIYVIGGVTTNKEKKPEGNLSNKIFCFDPLNNKWYRKPSLSSPRAFSAATTQNKKIWIWGGANLSEEGLLSSIDSIDVLDPKKGTLEHHMNFELAKHCHAVAKTGAHVFIVGGMSSVEASAIAETEMYDRKRNIIQRCSLLPVALTGIAVAAIPADTGGEYYEVPTSTPSSKAKPQPGSKPTSVKYKKQPDIHERNEAAKKVQRRWRRYIEQKSITKRMQQGDSSGSTMLEGNDRISGRIRTYISGYRPLPPDQDDLSKELVPVSIPFWPPDPDTTDSVFHTVRDQYRNPEEQMGFKHFYTIPRQMDPNLGMLLFMDEDYQHSKKVLGLRSVESVPYYINRFQASGTIQDNTIPVIIGTGGVDLRDPMNIAYGRSVFQYHPLKDRWEFFGYMPQPRNYHAAAYYRSAIYITGGYDPDVRTWGEMVATKTTFVYELASKNWTRMGDMRCARSHHSLLVFNDVLYAIGGRDDIGRLVSSVESYDHESNEWTMEKSMPSPRMGMAAVAHGGYIWLLGGLTSMTTEEPPVLDDVLCYDPVFKHWVDGRPLRIGRAFGNAAVCDNKIWLCGGAAPSTDENNYLVSVPAIDVYDEETMEWKQKTSLGCPRHSAIVVALESCLYIAGGVNSHELSATSRNELYMVDNDTIQTVRELPIPLTGMAAVTIPPKCVTFRSESLSIMIRHKVTP.

Kelch repeat units lie at residues 82–133, 134–187, 188–235, 237–289, 291–341, and 342–390; these read VVLA…YFHR, RVYV…VMDE, RIFV…NNEG, IYVI…TQNK, IWIW…KTGA, and HVFI…AIPA. The tract at residues 398-427 is disordered; that stretch reads EVPTSTPSSKAKPQPGSKPTSVKYKKQPDI. Positions 430 to 459 constitute an IQ domain; sequence RNEAAKKVQRRWRRYIEQKSITKRMQQGDS. Kelch repeat units follow at residues 590–641, 642–695, 696–743, 745–795, 797–849, and 851–898; these read VIIG…YYRS, AIYI…VFND, VLYA…AHGG, IWLL…VCDN, IWLC…ALES, and LYIA…TIPP.

Sperm.

In terms of biological role, actin bundling protein found in the acrosomal sperm process. This chain is Alpha-scruin, found in Limulus polyphemus (Atlantic horseshoe crab).